The primary structure comprises 302 residues: 4-hydroxy-tetrahydrodipicolinate synthase (302 aa).

Residue threonine 56 coordinates pyruvate. Catalysis depends on tyrosine 145, which acts as the Proton donor/acceptor. Lysine 173 acts as the Schiff-base intermediate with substrate in catalysis. Position 215 (valine 215) interacts with pyruvate.

Belongs to the DapA family. In terms of assembly, homotetramer; dimer of dimers.

Its subcellular location is the cytoplasm. The enzyme catalyses L-aspartate 4-semialdehyde + pyruvate = (2S,4S)-4-hydroxy-2,3,4,5-tetrahydrodipicolinate + H2O + H(+). Its pathway is amino-acid biosynthesis; L-lysine biosynthesis via DAP pathway; (S)-tetrahydrodipicolinate from L-aspartate: step 3/4. Its function is as follows. Catalyzes the condensation of (S)-aspartate-beta-semialdehyde [(S)-ASA] and pyruvate to 4-hydroxy-tetrahydrodipicolinate (HTPA). This is 4-hydroxy-tetrahydrodipicolinate synthase from Prochlorococcus marinus (strain MIT 9515).